The following is a 386-amino-acid chain: WD repeat-containing protein 89 (386 aa).

WD repeat units lie at residues 21–65, 68–107, 112–156, 167–207, 213–253, and 318–357; these read KEPT…LLRE, GSPG…EKPA, GYPS…QDLS, THSD…EEDA, NSVS…TDEP, and GHAA…KTFT.

This Rattus norvegicus (Rat) protein is WD repeat-containing protein 89 (Wdr89).